The following is a 207-amino-acid chain: Protein FMP32, mitochondrial (207 aa).

Residues 100–136 (ADRSEFHNIQNEYESVKNDLEKLRNKLREEITKTNAG) adopt a coiled-coil conformation. Residues 184-206 (VMQWLIGVCTGTFALVLAYMRLL) form a helical membrane-spanning segment.

The protein belongs to the CCDC90 family.

It localises to the mitochondrion. Its subcellular location is the membrane. This is Protein FMP32, mitochondrial (FMP32) from Saccharomyces cerevisiae (strain ATCC 204508 / S288c) (Baker's yeast).